The following is a 222-amino-acid chain: Kunitz trypsin inhibitor 3 (222 aa).

A signal peptide spans 1–23; the sequence is MEKLTLSFITLTVLSAIFTAASA. N-linked (GlcNAc...) asparagine glycosylation is present at Asn65. Intrachain disulfides connect Cys72–Cys119 and Cys165–Cys173. Residue Asn175 is glycosylated (N-linked (GlcNAc...) asparagine).

It belongs to the protease inhibitor I3 (leguminous Kunitz-type inhibitor) family.

In terms of biological role, exhibits Kunitz trypsin protease inhibitor activity. The protein is Kunitz trypsin inhibitor 3 of Arabidopsis thaliana (Mouse-ear cress).